A 132-amino-acid chain; its full sequence is S-protein homolog 19 (132 aa).

The signal sequence occupies residues 1-26; it reads MSGSLAFHIIMSVTFMVFFFGGLCEA. The N-linked (GlcNAc...) asparagine glycan is linked to asparagine 87.

This sequence belongs to the plant self-incompatibility (S1) protein family.

The protein localises to the secreted. The polypeptide is S-protein homolog 19 (Arabidopsis thaliana (Mouse-ear cress)).